The chain runs to 697 residues: Phosphoribosylformylglycinamidine synthase subunit PurL (697 aa).

Residue H34 is part of the active site. Y37 and K76 together coordinate ATP. Residue E78 participates in Mg(2+) binding. Residues 79–82 (SHNH) and R101 contribute to the substrate site. H80 (proton acceptor) is an active-site residue. Mg(2+) is bound at residue D102. Q224 lines the substrate pocket. D250 serves as a coordination point for Mg(2+). A substrate-binding site is contributed by 294-296 (ETQ). Residues D472 and G509 each coordinate ATP. S512 provides a ligand contact to substrate.

This sequence belongs to the FGAMS family. In terms of assembly, monomer. Part of the FGAM synthase complex composed of 1 PurL, 1 PurQ and 2 PurS subunits.

The protein localises to the cytoplasm. The enzyme catalyses N(2)-formyl-N(1)-(5-phospho-beta-D-ribosyl)glycinamide + L-glutamine + ATP + H2O = 2-formamido-N(1)-(5-O-phospho-beta-D-ribosyl)acetamidine + L-glutamate + ADP + phosphate + H(+). Its pathway is purine metabolism; IMP biosynthesis via de novo pathway; 5-amino-1-(5-phospho-D-ribosyl)imidazole from N(2)-formyl-N(1)-(5-phospho-D-ribosyl)glycinamide: step 1/2. Functionally, part of the phosphoribosylformylglycinamidine synthase complex involved in the purines biosynthetic pathway. Catalyzes the ATP-dependent conversion of formylglycinamide ribonucleotide (FGAR) and glutamine to yield formylglycinamidine ribonucleotide (FGAM) and glutamate. The FGAM synthase complex is composed of three subunits. PurQ produces an ammonia molecule by converting glutamine to glutamate. PurL transfers the ammonia molecule to FGAR to form FGAM in an ATP-dependent manner. PurS interacts with PurQ and PurL and is thought to assist in the transfer of the ammonia molecule from PurQ to PurL. The chain is Phosphoribosylformylglycinamidine synthase subunit PurL from Pyrobaculum aerophilum (strain ATCC 51768 / DSM 7523 / JCM 9630 / CIP 104966 / NBRC 100827 / IM2).